Reading from the N-terminus, the 283-residue chain is Phosphatidylserine decarboxylase proenzyme (283 aa).

Catalysis depends on charge relay system; for autoendoproteolytic cleavage activity residues Asp-88, His-145, and Ser-248. Ser-248 (schiff-base intermediate with substrate; via pyruvic acid; for decarboxylase activity) is an active-site residue. Ser-248 is modified (pyruvic acid (Ser); by autocatalysis).

The protein belongs to the phosphatidylserine decarboxylase family. PSD-B subfamily. Prokaryotic type I sub-subfamily. Heterodimer of a large membrane-associated beta subunit and a small pyruvoyl-containing alpha subunit. Pyruvate serves as cofactor. Post-translationally, is synthesized initially as an inactive proenzyme. Formation of the active enzyme involves a self-maturation process in which the active site pyruvoyl group is generated from an internal serine residue via an autocatalytic post-translational modification. Two non-identical subunits are generated from the proenzyme in this reaction, and the pyruvate is formed at the N-terminus of the alpha chain, which is derived from the carboxyl end of the proenzyme. The autoendoproteolytic cleavage occurs by a canonical serine protease mechanism, in which the side chain hydroxyl group of the serine supplies its oxygen atom to form the C-terminus of the beta chain, while the remainder of the serine residue undergoes an oxidative deamination to produce ammonia and the pyruvoyl prosthetic group on the alpha chain. During this reaction, the Ser that is part of the protease active site of the proenzyme becomes the pyruvoyl prosthetic group, which constitutes an essential element of the active site of the mature decarboxylase.

It localises to the cell membrane. The catalysed reaction is a 1,2-diacyl-sn-glycero-3-phospho-L-serine + H(+) = a 1,2-diacyl-sn-glycero-3-phosphoethanolamine + CO2. The protein operates within phospholipid metabolism; phosphatidylethanolamine biosynthesis; phosphatidylethanolamine from CDP-diacylglycerol: step 2/2. In terms of biological role, catalyzes the formation of phosphatidylethanolamine (PtdEtn) from phosphatidylserine (PtdSer). The chain is Phosphatidylserine decarboxylase proenzyme from Acidovorax ebreus (strain TPSY) (Diaphorobacter sp. (strain TPSY)).